Here is a 355-residue protein sequence, read N- to C-terminus: Elongation factor Ts (355 aa).

The interval 82 to 85 (TDFV) is involved in Mg(2+) ion dislocation from EF-Tu.

It belongs to the EF-Ts family.

Its subcellular location is the cytoplasm. Its function is as follows. Associates with the EF-Tu.GDP complex and induces the exchange of GDP to GTP. It remains bound to the aminoacyl-tRNA.EF-Tu.GTP complex up to the GTP hydrolysis stage on the ribosome. This chain is Elongation factor Ts, found in Helicobacter hepaticus (strain ATCC 51449 / 3B1).